The primary structure comprises 89 residues: Acyl-CoA-binding protein (89 aa).

The ACB domain maps to 3–88 (LKEEFEEHAE…VKQLFEAAGS (86 aa)). An acyl-CoA contacts are provided by residues 30–34 (YGLYK), Lys-56, and Tyr-75.

The protein belongs to the ACBP family.

Functionally, binds medium- and long-chain acyl-CoA esters with very high affinity and may function as an intracellular carrier of acyl-CoA esters. The chain is Acyl-CoA-binding protein from Gossypium hirsutum (Upland cotton).